The sequence spans 565 residues: Estrogen receptor gamma (565 aa).

Residues 1–168 (MAVASSPEKD…TSGGKTDLHY (168 aa)) form a modulating region. 2 NR C4-type zinc fingers span residues 169–189 (CAVC…CEGC) and 205–229 (CPAT…LRKC). Positions 169–234 (CAVCHDYASG…RLRKCYEVGM (66 aa)) form a DNA-binding region, nuclear receptor. Residues 235–285 (TKCGMRKERGNYRSPQMRRMTRLTSQGRTDSSSVLTGSAVVSLNAPQPSAL) are hinge. Residues 286–516 (TSEQLIERLM…DLLLEMLDAH (231 aa)) enclose the NR LBD domain. Residues 522–565 (RLPRRSPEQEPEDQADAPAPPHSSGSGPSYTWTPSSSEGAGEPQ) are disordered.

It belongs to the nuclear hormone receptor family. NR3 subfamily. As to quaternary structure, homodimer. Abundant in the ovary and testes, barely detectable in the brain and muscle and undetectable in the liver.

Its subcellular location is the nucleus. The steroid hormones and their receptors are involved in the regulation of eukaryotic gene expression and affect cellular proliferation and differentiation in target tissues. The polypeptide is Estrogen receptor gamma (esr3) (Micropogonias undulatus (Atlantic croaker)).